Consider the following 389-residue polypeptide: Succinate--CoA ligase [ADP-forming] subunit beta (389 aa).

One can recognise an ATP-grasp domain in the interval 9–244 (KEILRKFGVA…LDEEDPAEVE (236 aa)). ATP is bound by residues K46, 53-55 (GRG), E99, A102, and E107. Residues N199 and D213 each coordinate Mg(2+). Substrate contacts are provided by residues N264 and 321–323 (GIM).

This sequence belongs to the succinate/malate CoA ligase beta subunit family. Heterotetramer of two alpha and two beta subunits. Mg(2+) is required as a cofactor.

The catalysed reaction is succinate + ATP + CoA = succinyl-CoA + ADP + phosphate. It catalyses the reaction GTP + succinate + CoA = succinyl-CoA + GDP + phosphate. Its pathway is carbohydrate metabolism; tricarboxylic acid cycle; succinate from succinyl-CoA (ligase route): step 1/1. Its function is as follows. Succinyl-CoA synthetase functions in the citric acid cycle (TCA), coupling the hydrolysis of succinyl-CoA to the synthesis of either ATP or GTP and thus represents the only step of substrate-level phosphorylation in the TCA. The beta subunit provides nucleotide specificity of the enzyme and binds the substrate succinate, while the binding sites for coenzyme A and phosphate are found in the alpha subunit. The protein is Succinate--CoA ligase [ADP-forming] subunit beta of Paraburkholderia phytofirmans (strain DSM 17436 / LMG 22146 / PsJN) (Burkholderia phytofirmans).